A 155-amino-acid chain; its full sequence is 6,7-dimethyl-8-ribityllumazine synthase (155 aa).

5-amino-6-(D-ribitylamino)uracil contacts are provided by residues W24, 58-60 (AFE), and 82-84 (AVI). 87 to 88 (GT) is a binding site for (2S)-2-hydroxy-3-oxobutyl phosphate. The active-site Proton donor is H90. F115 lines the 5-amino-6-(D-ribitylamino)uracil pocket. R129 is a binding site for (2S)-2-hydroxy-3-oxobutyl phosphate.

The protein belongs to the DMRL synthase family. Forms an icosahedral capsid composed of 60 subunits, arranged as a dodecamer of pentamers.

The catalysed reaction is (2S)-2-hydroxy-3-oxobutyl phosphate + 5-amino-6-(D-ribitylamino)uracil = 6,7-dimethyl-8-(1-D-ribityl)lumazine + phosphate + 2 H2O + H(+). It participates in cofactor biosynthesis; riboflavin biosynthesis; riboflavin from 2-hydroxy-3-oxobutyl phosphate and 5-amino-6-(D-ribitylamino)uracil: step 1/2. Functionally, catalyzes the formation of 6,7-dimethyl-8-ribityllumazine by condensation of 5-amino-6-(D-ribitylamino)uracil with 3,4-dihydroxy-2-butanone 4-phosphate. This is the penultimate step in the biosynthesis of riboflavin. This is 6,7-dimethyl-8-ribityllumazine synthase from Saccharophagus degradans (strain 2-40 / ATCC 43961 / DSM 17024).